Reading from the N-terminus, the 194-residue chain is MSAITITQAAEDYLAELLSKQDTPGIGIRVFITQPGTPYAETCIAYCKPGEQKPEDTPVGLASFTAWIDAVSEPFLEDAVVDYATDRMGGQLTIKAPNAKVPMVNEDSPLNERINYYLQTEINPGLASHGGQVSLVDVVEEGIAVLRFGGGCQGCGQADYTLKEGIEKTLLERIPELKGVRDVTDHSNRENAYY.

Positions 152 and 155 each coordinate [4Fe-4S] cluster.

The protein belongs to the NfuA family. As to quaternary structure, homodimer. Requires [4Fe-4S] cluster as cofactor.

Involved in iron-sulfur cluster biogenesis. Binds a 4Fe-4S cluster, can transfer this cluster to apoproteins, and thereby intervenes in the maturation of Fe/S proteins. Could also act as a scaffold/chaperone for damaged Fe/S proteins. The polypeptide is Fe/S biogenesis protein NfuA (Ectopseudomonas mendocina (strain ymp) (Pseudomonas mendocina)).